The primary structure comprises 134 residues: uncharacterized protein (134 aa).

Positions Met1–Ser37 are cleaved as a signal peptide.

This is an uncharacterized protein from Coxiella burnetii (strain RSA 493 / Nine Mile phase I).